Reading from the N-terminus, the 470-residue chain is Uronate isomerase (470 aa).

The protein belongs to the metallo-dependent hydrolases superfamily. Uronate isomerase family.

The enzyme catalyses D-glucuronate = D-fructuronate. The catalysed reaction is aldehydo-D-galacturonate = keto-D-tagaturonate. Its pathway is carbohydrate metabolism; pentose and glucuronate interconversion. The protein is Uronate isomerase of Vibrio vulnificus (strain CMCP6).